Here is a 301-residue protein sequence, read N- to C-terminus: Recombination-associated protein RdgC (301 aa).

The protein belongs to the RdgC family.

The protein localises to the cytoplasm. It is found in the nucleoid. In terms of biological role, may be involved in recombination. In Xanthomonas oryzae pv. oryzae (strain KACC10331 / KXO85), this protein is Recombination-associated protein RdgC.